A 273-amino-acid chain; its full sequence is Ribosomal RNA small subunit methyltransferase A (273 aa).

6 residues coordinate S-adenosyl-L-methionine: asparagine 18, leucine 20, glycine 45, glutamate 66, aspartate 91, and asparagine 113.

This sequence belongs to the class I-like SAM-binding methyltransferase superfamily. rRNA adenine N(6)-methyltransferase family. RsmA subfamily.

It is found in the cytoplasm. The enzyme catalyses adenosine(1518)/adenosine(1519) in 16S rRNA + 4 S-adenosyl-L-methionine = N(6)-dimethyladenosine(1518)/N(6)-dimethyladenosine(1519) in 16S rRNA + 4 S-adenosyl-L-homocysteine + 4 H(+). Its function is as follows. Specifically dimethylates two adjacent adenosines (A1518 and A1519) in the loop of a conserved hairpin near the 3'-end of 16S rRNA in the 30S particle. May play a critical role in biogenesis of 30S subunits. The sequence is that of Ribosomal RNA small subunit methyltransferase A from Escherichia coli (strain 55989 / EAEC).